We begin with the raw amino-acid sequence, 462 residues long: Trigger factor (462 aa).

Residues 172-257 (GDKATIDFVG…LKALAAPGET (86 aa)) form the PPIase FKBP-type domain. A disordered region spans residues 443-462 (LLAADEEDEEEAAESSAALV). Residues 444–455 (LAADEEDEEEAA) show a composition bias toward acidic residues.

The protein belongs to the FKBP-type PPIase family. Tig subfamily.

It is found in the cytoplasm. The catalysed reaction is [protein]-peptidylproline (omega=180) = [protein]-peptidylproline (omega=0). Functionally, involved in protein export. Acts as a chaperone by maintaining the newly synthesized protein in an open conformation. Functions as a peptidyl-prolyl cis-trans isomerase. This Methylocella silvestris (strain DSM 15510 / CIP 108128 / LMG 27833 / NCIMB 13906 / BL2) protein is Trigger factor.